Here is a 491-residue protein sequence, read N- to C-terminus: Mitochondrial distribution and morphology protein 12 (491 aa).

Residues 1 to 491 (MSIDLNWEAA…VFPSYWTFLV (491 aa)) form the SMP-LTD domain. Over residues 72–82 (ESDSSEDEDGE) the composition is skewed to acidic residues. 3 disordered regions span residues 72 to 123 (ESDS…NHHD), 201 to 313 (GWPD…MRER), and 389 to 434 (GDED…QPRR). Basic and acidic residues-rich tracts occupy residues 83–123 (GHDA…NHHD) and 213–229 (MTDH…HNKN). Polar residues predominate over residues 230–249 (ETGSPSRPSTAHTNPTQLSH). The segment covering 252–262 (SAASSSNNTSN) has biased composition (low complexity). The segment covering 270–279 (DHTSSTTATT) has biased composition (polar residues). Low complexity predominate over residues 400–421 (STANTTTAASGSSTDNNNNNNE).

Belongs to the MDM12 family. In terms of assembly, component of the ER-mitochondria encounter structure (ERMES) or MDM complex, composed of mmm1, mdm10, mdm12 and mdm34. A mmm1 homodimer associates with one molecule of mdm12 on each side in a pairwise head-to-tail manner, and the SMP-LTD domains of mmm1 and mdm12 generate a continuous hydrophobic tunnel for phospholipid trafficking.

It is found in the mitochondrion outer membrane. The protein localises to the endoplasmic reticulum membrane. Component of the ERMES/MDM complex, which serves as a molecular tether to connect the endoplasmic reticulum (ER) and mitochondria. Components of this complex are involved in the control of mitochondrial shape and protein biogenesis, and function in nonvesicular lipid trafficking between the ER and mitochondria. Mdm12 is required for the interaction of the ER-resident membrane protein mmm1 and the outer mitochondrial membrane-resident beta-barrel protein mdm10. The mdm12-mmm1 subcomplex functions in the major beta-barrel assembly pathway that is responsible for biogenesis of all mitochondrial outer membrane beta-barrel proteins, and acts in a late step after the SAM complex. The mdm10-mdm12-mmm1 subcomplex further acts in the TOM40-specific pathway after the action of the mdm12-mmm1 complex. Essential for establishing and maintaining the structure of mitochondria and maintenance of mtDNA nucleoids. This Talaromyces stipitatus (strain ATCC 10500 / CBS 375.48 / QM 6759 / NRRL 1006) (Penicillium stipitatum) protein is Mitochondrial distribution and morphology protein 12.